A 572-amino-acid chain; its full sequence is DNA polymerase (572 aa).

The segment at 1–222 (MSRKMFSCDF…LPMDKEIRKA (222 aa)) is 3'-5' exonuclease and strand displacement activities. Residues 56–66 (YFHNLKFDGAF) form an interaction with the primer terminal protein region. Asp142 and Asp166 together coordinate Mg(2+). Residues 223–226 (YRGG) are DNA-binding; Involved in the formation of a stable complex between TP and phi29 DNA polymerase. Residues 227 to 572 (FTWLNDKYKE…VLVDSVFTIK (346 aa)) form an initiation, polymerization and pyrophosphorolytic activities region. The Mg(2+) site is built by Asp246 and Val247. 3 residues coordinate 5-methyl-UTP: Tyr251, Lys368, and Lys380. Asp453 and Asp455 together coordinate Mg(2+). Asp455 is a 5-methyl-UTP binding site.

This sequence belongs to the DNA polymerase type-B family. Interacts with the primer terminal protein; this interaction allows the initiation of TP-primed DNA replication at both viral DNA ends. Interacts with DNA. It depends on Mg(2+) as a cofactor.

The catalysed reaction is DNA(n) + a 2'-deoxyribonucleoside 5'-triphosphate = DNA(n+1) + diphosphate. Functionally, polymerase responsible for protein-primed viral DNA replication by strand displacement with high processivity and fidelity. To start replication, the DNA polymerase forms a heterodimer with a free primer terminal protein (TP), recognizes the replication origins at both 5' ends of the linear chromosome, and initiates replication using as primer the OH-group of Ser-232 of the TP. This polymerase possesses three enzymatic activities: DNA synthesis (polymerase), primer terminal protein (TP) deoxynucleotidylation, which is the formation of a covalent linkage (phosphoester) between the hydroxyl group of a specific serine residue in TP and 5'-dAMP, a reaction directed by the second T at the 3' end, and 3' to 5' exonuclease activity. Exonuclease activity has a proofreading purpose. The polypeptide is DNA polymerase (G) (Bacillus phage M2 (Bacteriophage M2)).